Consider the following 115-residue polypeptide: Large ribosomal subunit protein bL20c (115 aa).

The protein belongs to the bacterial ribosomal protein bL20 family.

The protein localises to the plastid. The protein resides in the chloroplast. Its function is as follows. Binds directly to 23S ribosomal RNA and is necessary for the in vitro assembly process of the 50S ribosomal subunit. It is not involved in the protein synthesizing functions of that subunit. This is Large ribosomal subunit protein bL20c (rpl20) from Mesostigma viride (Green alga).